Reading from the N-terminus, the 536-residue chain is Arylsulfatase K (536 aa).

Residues 1–22 (MLLLWVSVVAALALAVLAPGAG) form the signal peptide. Asp-40 and Cys-80 together coordinate Ca(2+). Cys-80 (nucleophile) is an active-site residue. Position 80 is a 3-oxoalanine (Cys) (Cys-80). Asn-108 is a glycosylation site (N-linked (GlcNAc...) asparagine). Lys-128 provides a ligand contact to substrate. Asn-166 and Asn-193 each carry an N-linked (GlcNAc...) asparagine glycan. His-251 lines the substrate pocket. An N-linked (GlcNAc...) asparagine glycan is attached at Asn-262. Ca(2+) contacts are provided by Asp-313 and His-314. N-linked (GlcNAc...) asparagine glycans are attached at residues Asn-375, Asn-413, and Asn-498.

This sequence belongs to the sulfatase family. Ca(2+) is required as a cofactor. In terms of processing, the conversion to 3-oxoalanine (also known as C-formylglycine, FGly), of a serine or cysteine residue in prokaryotes and of a cysteine residue in eukaryotes, is critical for catalytic activity. The 75-kDa precursor undergoes proteolytic processing to yield a 23 kDa form. Post-translationally, N-glycosylated with both high mannose and complex type sugars. Expressed at high levels in the placenta and pancreas. Expressed at intermediate levels in the lung, brain, heart, liver and kidney and at low levels in the muscle.

The protein localises to the secreted. It is found in the lysosome. The catalysed reaction is an aryl sulfate + H2O = a phenol + sulfate + H(+). The enzyme catalyses Hydrolysis of the 2-sulfate groups of the 2-O-sulfo-D-glucuronate residues of chondroitin sulfate, heparin and heparitin sulfate.. Its function is as follows. Catalyzes the hydrolysis of pseudosubstrates such as p-nitrocatechol sulfate and p-nitrophenyl sulfate. Catalyzes the hydrolysis of the 2-sulfate groups of the 2-O-sulfo-D-glucuronate residues of chondroitin sulfate, heparin and heparitin sulfate. Acts selectively on 2-sulfoglucuronate and lacks activity against 2-sulfoiduronate. This Homo sapiens (Human) protein is Arylsulfatase K (ARSK).